The chain runs to 90 residues: MEAGSRVIMQVLLLALVVQVTLSQHWSYGWLPGGKRSVGELEATIRMMGTGGVVSLPDEANAQIQERLRPYNIINDDSSHFDRKKRFPNN.

The N-terminal stretch at 1 to 23 is a signal peptide; the sequence is MEAGSRVIMQVLLLALVVQVTLS. Glutamine 24 bears the Pyrrolidone carboxylic acid mark. At glycine 33 the chain carries Glycine amide.

The protein belongs to the GnRH family. Expressed only in the terminal nerve nucleus of the telencephalon.

The protein localises to the secreted. Stimulates the secretion of gonadotropins. This Haplochromis burtoni (Burton's mouthbrooder) protein is Progonadoliberin-3 (gnrh3).